The following is a 141-amino-acid chain: 6,7-dimethyl-8-ribityllumazine synthase (141 aa).

5-amino-6-(D-ribitylamino)uracil contacts are provided by residues Phe-11, 42–44, and 66–68; these read ALE and VVI. Position 71–72 (71–72) interacts with (2S)-2-hydroxy-3-oxobutyl phosphate; that stretch reads ET. His-74 serves as the catalytic Proton donor. 5-amino-6-(D-ribitylamino)uracil is bound at residue Asn-98. Arg-112 provides a ligand contact to (2S)-2-hydroxy-3-oxobutyl phosphate.

The protein belongs to the DMRL synthase family.

The catalysed reaction is (2S)-2-hydroxy-3-oxobutyl phosphate + 5-amino-6-(D-ribitylamino)uracil = 6,7-dimethyl-8-(1-D-ribityl)lumazine + phosphate + 2 H2O + H(+). Its pathway is cofactor biosynthesis; riboflavin biosynthesis; riboflavin from 2-hydroxy-3-oxobutyl phosphate and 5-amino-6-(D-ribitylamino)uracil: step 1/2. Catalyzes the formation of 6,7-dimethyl-8-ribityllumazine by condensation of 5-amino-6-(D-ribitylamino)uracil with 3,4-dihydroxy-2-butanone 4-phosphate. This is the penultimate step in the biosynthesis of riboflavin. In Sphingopyxis alaskensis (strain DSM 13593 / LMG 18877 / RB2256) (Sphingomonas alaskensis), this protein is 6,7-dimethyl-8-ribityllumazine synthase.